The primary structure comprises 209 residues: Uracil phosphoribosyltransferase (209 aa).

Residues Arg79, Arg104, and 131 to 139 (DPMLATGGS) contribute to the 5-phospho-alpha-D-ribose 1-diphosphate site. Uracil is bound by residues Ile194 and 199-201 (GDA). Asp200 is a binding site for 5-phospho-alpha-D-ribose 1-diphosphate.

The protein belongs to the UPRTase family. Mg(2+) serves as cofactor.

It catalyses the reaction UMP + diphosphate = 5-phospho-alpha-D-ribose 1-diphosphate + uracil. The protein operates within pyrimidine metabolism; UMP biosynthesis via salvage pathway; UMP from uracil: step 1/1. With respect to regulation, allosterically activated by GTP. In terms of biological role, catalyzes the conversion of uracil and 5-phospho-alpha-D-ribose 1-diphosphate (PRPP) to UMP and diphosphate. The polypeptide is Uracil phosphoribosyltransferase (Streptococcus pneumoniae serotype 4 (strain ATCC BAA-334 / TIGR4)).